Here is a 174-residue protein sequence, read N- to C-terminus: Granulocyte colony-stimulating factor (174 aa).

2 disulfides stabilise this stretch: C36-C42 and C64-C74. Residue T133 is glycosylated (O-linked (GalNAc...) threonine).

Belongs to the IL-6 superfamily. Monomer. In terms of processing, O-glycosylated.

It localises to the secreted. In terms of biological role, granulocyte/macrophage colony-stimulating factors are cytokines that act in hematopoiesis by controlling the production, differentiation, and function of 2 related white cell populations of the blood, the granulocytes and the monocytes-macrophages. This CSF induces granulocytes. In Ovis aries (Sheep), this protein is Granulocyte colony-stimulating factor (CSF3).